A 331-amino-acid chain; its full sequence is Ketol-acid reductoisomerase (NADP(+)) (331 aa).

One can recognise a KARI N-terminal Rossmann domain in the interval 4 to 183; it reads ATIYYDDDAE…GCTRAGVVET (180 aa). NADP(+) is bound by residues 27–30, Arg50, Ser53, Ser55, and 85–88; these read YGSQ and DTVQ. Residue His109 is part of the active site. Gly135 lines the NADP(+) pocket. The 146-residue stretch at 184-329 folds into the KARI C-terminal knotted domain; it reads TFREETETDL…EDLRALFAWG (146 aa). Residues Asp192, Glu196, Glu228, and Glu232 each coordinate Mg(2+). Substrate is bound at residue Ser253.

It belongs to the ketol-acid reductoisomerase family. It depends on Mg(2+) as a cofactor.

The enzyme catalyses (2R)-2,3-dihydroxy-3-methylbutanoate + NADP(+) = (2S)-2-acetolactate + NADPH + H(+). It catalyses the reaction (2R,3R)-2,3-dihydroxy-3-methylpentanoate + NADP(+) = (S)-2-ethyl-2-hydroxy-3-oxobutanoate + NADPH + H(+). Its pathway is amino-acid biosynthesis; L-isoleucine biosynthesis; L-isoleucine from 2-oxobutanoate: step 2/4. The protein operates within amino-acid biosynthesis; L-valine biosynthesis; L-valine from pyruvate: step 2/4. Its function is as follows. Involved in the biosynthesis of branched-chain amino acids (BCAA). Catalyzes an alkyl-migration followed by a ketol-acid reduction of (S)-2-acetolactate (S2AL) to yield (R)-2,3-dihydroxy-isovalerate. In the isomerase reaction, S2AL is rearranged via a Mg-dependent methyl migration to produce 3-hydroxy-3-methyl-2-ketobutyrate (HMKB). In the reductase reaction, this 2-ketoacid undergoes a metal-dependent reduction by NADPH to yield (R)-2,3-dihydroxy-isovalerate. This is Ketol-acid reductoisomerase (NADP(+)) from Natronomonas pharaonis (strain ATCC 35678 / DSM 2160 / CIP 103997 / JCM 8858 / NBRC 14720 / NCIMB 2260 / Gabara) (Halobacterium pharaonis).